A 667-amino-acid chain; its full sequence is Fermitin family homolog 3 (667 aa).

The residue at position 8 (Ser8) is a Phosphoserine. Tyr11 carries the post-translational modification Phosphotyrosine. The FERM domain occupies 229-558 (WLDSSRCLMQ…SLPDFGISYV (330 aa)). In terms of domain architecture, PH spans 354-457 (DHLRIFRIPR…WMAGCRLASK (104 aa)). The residue at position 504 (Tyr504) is a Phosphotyrosine. Thr591 is subject to Phosphothreonine.

The protein belongs to the kindlin family. In terms of assembly, interacts with ITGB1, ITGB2 and ITGB3 (via cytoplasmic tails). Highly expressed in lymph node. Expressed in thymus, spleen and leukocytes. Weakly expressed in placenta, small intestine, stomach, testis and lung. Overexpressed in B-cell malignancies.

Its subcellular location is the cell projection. It is found in the podosome. Its function is as follows. Plays a central role in cell adhesion in hematopoietic cells. Acts by activating the integrin beta-1-3 (ITGB1, ITGB2 and ITGB3). Required for integrin-mediated platelet adhesion and leukocyte adhesion to endothelial cells. Required for activation of integrin beta-2 (ITGB2) in polymorphonuclear granulocytes (PMNs). In terms of biological role, isoform 2 may act as a repressor of NF-kappa-B and apoptosis. This Homo sapiens (Human) protein is Fermitin family homolog 3 (FERMT3).